The following is a 163-amino-acid chain: Large ribosomal subunit protein bL17 (163 aa).

The interval 127–163 (KEVKKAKSRRGGKAKKAEGTAPEAPAAESESTTEASE) is disordered. Basic residues predominate over residues 128–140 (EVKKAKSRRGGKA). The span at 145-163 (GTAPEAPAAESESTTEASE) shows a compositional bias: low complexity.

This sequence belongs to the bacterial ribosomal protein bL17 family. As to quaternary structure, part of the 50S ribosomal subunit. Contacts protein L32.

The sequence is that of Large ribosomal subunit protein bL17 from Flavobacterium johnsoniae (strain ATCC 17061 / DSM 2064 / JCM 8514 / BCRC 14874 / CCUG 350202 / NBRC 14942 / NCIMB 11054 / UW101) (Cytophaga johnsonae).